Consider the following 107-residue polypeptide: Conantokin-R (107 aa).

A signal peptide spans 1 to 24 (MQLYTYLYLLVSLVTFYLILGTGT). Residues 25-80 (LGHGGALTERRSTDATALKPEPVLLQKSSARSTDDNGNDRLTQMKRILKKRGNKAR) constitute a propeptide that is removed on maturation. The segment at 26 to 64 (GHGGALTERRSTDATALKPEPVLLQKSSARSTDDNGNDR) is disordered. Glutamate 83, glutamate 84, glutamate 91, and glutamate 95 each carry 4-carboxyglutamate. Positions 91 and 95 each coordinate a divalent metal cation. Cysteines 101 and 105 form a disulfide.

It belongs to the conotoxin B superfamily. Ca(2+) is required as a cofactor. It depends on Mg(2+) as a cofactor. Expressed by the venom duct.

The protein localises to the secreted. In terms of biological role, conantokins inhibit N-methyl-D-aspartate (NMDA) receptors. This toxin is potent in the following order of preference: NR2B approximately NR2A/GRIN2A &gt; NR2C/GRIN2C &gt;&gt; NR2D/GRIN2D. Induces sleep-like symptoms in young mice. Is a highly potent anticonvulsant compound. The polypeptide is Conantokin-R (Conus radiatus (Rayed cone)).